Here is a 1005-residue protein sequence, read N- to C-terminus: Ephrin type-A receptor 5 (1005 aa).

Positions M1–P24 are disordered. Positions M1–V26 are cleaved as a signal peptide. The Extracellular segment spans residues P27–P575. Positions E62–R240 constitute an Eph LBD domain. N-linked (GlcNAc...) asparagine glycosylation is found at N266, N301, N371, N425, N438, and N463. Fibronectin type-III domains follow at residues P359 to A469 and A470 to V564. Residues I576–L596 form a helical membrane-spanning segment. Residues S597–E1005 are Cytoplasmic-facing. A phosphotyrosine; by autocatalysis mark is found at Y652 and Y658. Positions I677–I938 constitute a Protein kinase domain. ATP contacts are provided by residues I683–V691 and K709. D802 (proton acceptor) is an active-site residue. 2 positions are modified to phosphotyrosine; by autocatalysis: Y835 and Y984. Positions G967–E1005 constitute an SAM domain.

Belongs to the protein kinase superfamily. Tyr protein kinase family. Ephrin receptor subfamily. In terms of assembly, heterotetramer upon binding of the ligand. The heterotetramer is composed of an ephrin dimer and a receptor dimer. Oligomerization is probably required to induce biological responses. Interacts (via SAM domain) with SAMD5 (via SAM domain). Post-translationally, phosphorylated. Phosphorylation is stimulated by the ligand EFNA5. Dephosphorylation upon stimulation by glucose, inhibits EPHA5 forward signaling and results in insulin secretion. As to expression, almost exclusively expressed in the nervous system. Predominantly expressed in neurons.

Its subcellular location is the cell membrane. The protein localises to the cell projection. It localises to the axon. The protein resides in the dendrite. The enzyme catalyses L-tyrosyl-[protein] + ATP = O-phospho-L-tyrosyl-[protein] + ADP + H(+). Functionally, receptor tyrosine kinase which binds promiscuously GPI-anchored ephrin-A family ligands residing on adjacent cells, leading to contact-dependent bidirectional signaling into neighboring cells. The signaling pathway downstream of the receptor is referred to as forward signaling while the signaling pathway downstream of the ephrin ligand is referred to as reverse signaling. Among GPI-anchored ephrin-A ligands, EFNA5 most probably constitutes the cognate/functional ligand for EPHA5. Functions as an axon guidance molecule during development and may be involved in the development of the retinotectal, entorhino-hippocampal and hippocamposeptal pathways. Together with EFNA5 plays also a role in synaptic plasticity in adult brain through regulation of synaptogenesis. In addition to its function in the nervous system, the interaction of EPHA5 with EFNA5 mediates communication between pancreatic islet cells to regulate glucose-stimulated insulin secretion. The protein is Ephrin type-A receptor 5 (Epha5) of Rattus norvegicus (Rat).